Reading from the N-terminus, the 472-residue chain is Glutamate--tRNA ligase (472 aa).

The 'HIGH' region signature appears at 18–28 (PSPTGYLHIGG). The span at 122–138 (RARGEKPRYDGRWRPEP) shows a compositional bias: basic and acidic residues. Residues 122-150 (RARGEKPRYDGRWRPEPGKTLPVPPSGVQ) form a disordered region. The 'KMSKS' region signature appears at 250 to 254 (KLSKR). Lysine 253 provides a ligand contact to ATP.

It belongs to the class-I aminoacyl-tRNA synthetase family. Glutamate--tRNA ligase type 1 subfamily. Monomer.

It is found in the cytoplasm. The enzyme catalyses tRNA(Glu) + L-glutamate + ATP = L-glutamyl-tRNA(Glu) + AMP + diphosphate. In terms of biological role, catalyzes the attachment of glutamate to tRNA(Glu) in a two-step reaction: glutamate is first activated by ATP to form Glu-AMP and then transferred to the acceptor end of tRNA(Glu). The polypeptide is Glutamate--tRNA ligase (Thiobacillus denitrificans (strain ATCC 25259 / T1)).